The primary structure comprises 242 residues: Small ribosomal subunit protein eS1 (242 aa).

It belongs to the eukaryotic ribosomal protein eS1 family. Component of the small ribosomal subunit. Mature ribosomes consist of a small (40S) and a large (60S) subunit. The 40S subunit contains about 33 different proteins and 1 molecule of RNA (18S). The 60S subunit contains about 49 different proteins and 3 molecules of RNA (25S, 5.8S and 5S).

Its subcellular location is the cytoplasm. The chain is Small ribosomal subunit protein eS1 from Lodderomyces elongisporus (strain ATCC 11503 / CBS 2605 / JCM 1781 / NBRC 1676 / NRRL YB-4239) (Yeast).